The sequence spans 270 residues: Methylthioribulose-1-phosphate dehydratase (270 aa).

Position 122 (Cys122) interacts with substrate. Zn(2+) contacts are provided by His140 and His142. Glu165 (proton donor/acceptor) is an active-site residue. Residue His230 participates in Zn(2+) binding.

It belongs to the aldolase class II family. MtnB subfamily. Zn(2+) serves as cofactor.

The protein resides in the cytoplasm. The enzyme catalyses 5-(methylsulfanyl)-D-ribulose 1-phosphate = 5-methylsulfanyl-2,3-dioxopentyl phosphate + H2O. The protein operates within amino-acid biosynthesis; L-methionine biosynthesis via salvage pathway; L-methionine from S-methyl-5-thio-alpha-D-ribose 1-phosphate: step 2/6. In terms of biological role, catalyzes the dehydration of methylthioribulose-1-phosphate (MTRu-1-P) into 2,3-diketo-5-methylthiopentyl-1-phosphate (DK-MTP-1-P). In Candida albicans (strain SC5314 / ATCC MYA-2876) (Yeast), this protein is Methylthioribulose-1-phosphate dehydratase.